We begin with the raw amino-acid sequence, 159 residues long: Transcriptional repressor NrdR (159 aa).

A zinc finger spans residues 3–34 (CPFCRHDDTQVVDSRVSEDGAAIRRRRRCSAC). Positions 49 to 139 (PFVVKKDGSR…VYRRFEDVSE (91 aa)) constitute an ATP-cone domain.

This sequence belongs to the NrdR family. Zn(2+) serves as cofactor.

In terms of biological role, negatively regulates transcription of bacterial ribonucleotide reductase nrd genes and operons by binding to NrdR-boxes. This Burkholderia cenocepacia (strain ATCC BAA-245 / DSM 16553 / LMG 16656 / NCTC 13227 / J2315 / CF5610) (Burkholderia cepacia (strain J2315)) protein is Transcriptional repressor NrdR.